Consider the following 21-residue polypeptide: Peptide Hact-2 (21 aa).

Cystine bridges form between Cys-1–Cys-18, Cys-5–Cys-14, and Cys-9–Cys-20.

In terms of tissue distribution, expressed in tentacles.

The protein localises to the nematocyst. It localises to the secreted. In terms of biological role, peptide of unknown function. Does not exhibit antimicrobial activity against Escherichia coli and Staphylococcus aureus. Promotes cell proliferation of human fibroblast skin cells. Does not exhibit any effect on voltage-gated ion channels, including potassium, sodium, and calcium channels. The polypeptide is Peptide Hact-2 (Heliofungia actiniformis (Mushroom coral)).